The primary structure comprises 1308 residues: MKFSKQLSAQADLRYLNEYISYKDLKKAIKVITGSDVQVCTVQDVVSNFRQTNALTGSIFRPPESRFQELLNHELDKINSFSKREVEAILDQLAVALVIMWRLHAALTLLRLAPDSPGYAEAQALLKRLEQREQEIRNALVVYPQKRGRATEQDKAGSPSSNPRCRGVSDEPSSSSEERELGAEGDDFSSAGGKTSSRGEGDAKRRQGDEDGGEGEQDDAKRSVAEALILLEKDVLEVEGVLEAQSQEIVFLDSFVRLNFTGFRKITKKYDKHNQSSAASWYMSRVVRQDFMNLNFTLLLTRLARCYVALRSLRRRLGEQQQQSLSISPADDPSKAASVKEDRSTVGSFSQSLGPEGARLSTYKRTGGSDEGEQRREPRFSLAARSRGSRDCREDIKVTKYLIAPDELMKVKVLILKHLPLLAAGGIPMDDSVLCPFENSSQAVAAEDFSAALEAAASLLRTSGTASDKREARQSLGGSRVPTWEVYLDNEEFTYYTNTRTRRDSPDSCRGVAPSRRVVRVRWQGLPSLNSAGRQVALELSRPDSSIADPQEDITTPLASNAPDVASSAFTVILRQKQLLQLLHGLITPSKLLDQLMDEMEASAAGVATGEGANATAASHRTGARGAANRGEGSGGGGGNRGSDDRAVALTKQKRKADMLQVLQTVWDAVQQRGVSPSVRTWFYRTEFMSEDGVAWISVDEDIRFSREMNRTPPANQWIRSETEALSTDDVHPFPWGLLDVSFLVRDNGVALPQHAVQQAKDFHPLVGRDDLEDFVADLRGLSTLTEVPGFSLFAHGTAYFYTPRLQALQARMSGYEQAVHLIPLWLQYTTNAEFDDDASQVFDEATEGGKGKKADRTSVGQSRLGRNQGDSAERGQRAGSPGGLSRPRVCHRGSVIDVVHQGTSASLVHDLQASAQVSPPTSSGVDQLGNSHRPSVSESRHPSAPALSVLASAPSLPMPAPPLLEVSPFQSGARGLLTQPLLDDGDRMAGERQSASRGGAPTPSQSWLLTGARYWRRYCNCFSLSGSAGRRRRSMSCLFPWSQRSSARRIHPVGPRSMVAGGVTSGPSVRVEPKTFFANERTLLQWMNTAVLIATISITLMNFGNPVGRIAGLLMSPVAVFFIGYSFWVYLRRARALERKEPIAYNDKLGPSILVVTLMLSLSAVIALNLLYHEGEAQLPITPQNSSTSTAPSLPPSPHALPLLSQLNVSHSQAAYKAPSAPNATVNAGGYSVADVPAPDFSLSHPATAYAAATALAAAEAAAAAGPVSFAGAPERAVHAHVTEAMTHAASAETAAAEGARVTAGAK.

Residues 1–284 (MKFSKQLSAQ…QSSAASWYMS (284 aa)) form the SPX domain. At 1-1083 (MKFSKQLSAQ…PKTFFANERT (1083 aa)) the chain is on the cytoplasmic side. A disordered region spans residues 144–220 (PQKRGRATEQ…DGGEGEQDDA (77 aa)). A compositionally biased stretch (basic and acidic residues) spans 197–209 (SRGEGDAKRRQGD). The segment at 265 to 272 (KITKKYDK) is important for inositol polyphosphate binding. 5 disordered regions span residues 321 to 384 (QQQS…SLAA), 611 to 645 (EGANATAASHRTGARGAANRGEGSGGGGGNRGSDD), 846 to 890 (ATEG…RPRV), 915 to 946 (SAQVSPPTSSGVDQLGNSHRPSVSESRHPSAP), and 981 to 1004 (PLLDDGDRMAGERQSASRGGAPTP). Over residues 332–344 (DPSKAASVKEDRS) the composition is skewed to basic and acidic residues. Positions 632 to 641 (EGSGGGGGNR) are enriched in gly residues. Over residues 848-857 (EGGKGKKADR) the composition is skewed to basic and acidic residues. Polar residues-rich tracts occupy residues 859 to 871 (SVGQSRLGRNQGD) and 915 to 938 (SAQVSPPTSSGVDQLGNSHRPSVS). A helical membrane pass occupies residues 1084-1104 (LLQWMNTAVLIATISITLMNF). Topologically, residues 1105–1110 (GNPVGR) are vacuolar. The chain crosses the membrane as a helical span at residues 1111-1131 (IAGLLMSPVAVFFIGYSFWVY). Residues 1132–1152 (LRRARALERKEPIAYNDKLGP) are Cytoplasmic-facing. The chain crosses the membrane as a helical span at residues 1153–1173 (SILVVTLMLSLSAVIALNLLY). Residues 1174–1308 (HEGEAQLPIT…EGARVTAGAK (135 aa)) are Vacuolar-facing.

It belongs to the VTC2/3 family. In terms of assembly, the VTC core complex is an integral membrane heterooligomer composed of at least the catalytic subunit vtc4 and the accessory subunits vtc1 and vtc2. vtc1 is a small membrane protein without hydrophilic domain. Vtc2 and vtc4 are related and have 2 hydrophilic domains that face the cytosol, an N-terminal SPX domain and the central core domain. The central core in vtc4 is the catalytic domain.

It localises to the vacuole membrane. Accessory subunit of the vacuolar transporter chaperone (VTC) complex. The VTC complex acts as a vacuolar polyphosphate polymerase that catalyzes the synthesis of inorganic polyphosphate (polyP) via transfer of phosphate from ATP to a growing polyP chain, releasing ADP. VTC exposes its catalytic domain vtc4 to the cytosol, where the growing polyP chain winds through a tunnel-shaped pocket, integrating cytoplasmic polymer synthesis with polyP membrane translocation. The VTC complex carries 9 vacuolar transmembrane domains, which are likely to constitute the translocation channel into the organelle lumen. PolyP synthesis is tightly coupled to its transport into the vacuole lumen, in order to avoid otherwise toxic intermediates in the cytosol, and it depends on the proton gradient across the membrane, formed by V-ATPase. The VTC complex also plays a role in vacuolar membrane fusion. This Toxoplasma gondii (strain ATCC 50611 / Me49) protein is Vacuolar transporter chaperone complex subunit 2 (vtc2).